A 162-amino-acid chain; its full sequence is MATAEIEEIPALLKPGQTVAGLDLGTKTIGLAVSDLGLSFAHPRPVIKRVKFTIDAQVLLKALETDKVGVIVIGLPMNMDGTAGPRVQATRAFVRTMQPLTDLPFVFWDERLSTVAVERALIGMDVSRGKRADRIDSAAAAFILQGALDRLHMMRRNDYDAG.

Belongs to the YqgF nuclease family.

It is found in the cytoplasm. In terms of biological role, could be a nuclease involved in processing of the 5'-end of pre-16S rRNA. This is Putative pre-16S rRNA nuclease from Brucella melitensis biotype 1 (strain ATCC 23456 / CCUG 17765 / NCTC 10094 / 16M).